The following is a 104-amino-acid chain: T-complex protein 1 subunit zeta (104 aa).

Glycine 24 is an ADP binding site. An ATP-binding site is contributed by glycine 24. A Mg(2+)-binding site is contributed by aspartate 75. 3 residues coordinate ADP: glycine 76, threonine 78, and serine 79. Glycine 76 and threonine 78 together coordinate ATP.

Belongs to the TCP-1 chaperonin family. As to quaternary structure, component of the chaperonin-containing T-complex (TRiC), a hexadecamer composed of two identical back-to-back stacked rings enclosing a protein folding chamber. Each ring is made up of eight different subunits: TCP1/CCT1, CCT2, CCT3, CCT4, CCT5, CCT6A/CCT6, CCT7, CCT8. Interacts with PACRG.

The protein localises to the cytoplasm. It carries out the reaction ATP + H2O = ADP + phosphate + H(+). Component of the chaperonin-containing T-complex (TRiC), a molecular chaperone complex that assists the folding of actin, tubulin and other proteins upon ATP hydrolysis. The TRiC complex mediates the folding of WRAP53/TCAB1, thereby regulating telomere maintenance. The polypeptide is T-complex protein 1 subunit zeta (CCT6) (Sus scrofa (Pig)).